A 562-amino-acid chain; its full sequence is Dihydroxy-acid dehydratase (562 aa).

Residue Asp80 participates in Mg(2+) binding. Residue Cys121 participates in [2Fe-2S] cluster binding. The Mg(2+) site is built by Asp122 and Lys123. Lys123 carries the N6-carboxylysine modification. Cys194 is a binding site for [2Fe-2S] cluster. Residue Glu446 participates in Mg(2+) binding. The active-site Proton acceptor is the Ser472.

The protein belongs to the IlvD/Edd family. Homodimer. It depends on [2Fe-2S] cluster as a cofactor. Requires Mg(2+) as cofactor.

It carries out the reaction (2R)-2,3-dihydroxy-3-methylbutanoate = 3-methyl-2-oxobutanoate + H2O. The catalysed reaction is (2R,3R)-2,3-dihydroxy-3-methylpentanoate = (S)-3-methyl-2-oxopentanoate + H2O. It participates in amino-acid biosynthesis; L-isoleucine biosynthesis; L-isoleucine from 2-oxobutanoate: step 3/4. The protein operates within amino-acid biosynthesis; L-valine biosynthesis; L-valine from pyruvate: step 3/4. Functionally, functions in the biosynthesis of branched-chain amino acids. Catalyzes the dehydration of (2R,3R)-2,3-dihydroxy-3-methylpentanoate (2,3-dihydroxy-3-methylvalerate) into 2-oxo-3-methylpentanoate (2-oxo-3-methylvalerate) and of (2R)-2,3-dihydroxy-3-methylbutanoate (2,3-dihydroxyisovalerate) into 2-oxo-3-methylbutanoate (2-oxoisovalerate), the penultimate precursor to L-isoleucine and L-valine, respectively. The chain is Dihydroxy-acid dehydratase from Staphylococcus aureus (strain COL).